The primary structure comprises 1035 residues: GRB10-interacting GYF protein 1 (1035 aa).

A phosphoserine mark is found at S24, S28, S137, and S157. A disordered region spans residues 105-422; that stretch reads KGAGPPLAGT…AGPPGDLEDD (318 aa). Basic and acidic residues-rich tracts occupy residues 148-179 and 186-203; these read SPRE…RCGF and PRKE…SLRE. Position 230 is a phosphoserine (S230). Positions 239-267 are enriched in basic and acidic residues; the sequence is GWREHGERRRKFEFDLRGDRGGCGEEEGR. 2 stretches are compositionally biased toward acidic residues: residues 295 to 304 and 324 to 349; these read CLDDEDEEMG and PEEQ…EEGP. Phosphoserine is present on S341. Residues 367–378 show a composition bias toward low complexity; sequence SSPSPLPTLGPL. Basic and acidic residues predominate over residues 388–401; that stretch reads TAEKEPPAAEDDIR. S406 is modified (phosphoserine). Positions 406–417 are enriched in low complexity; sequence SPGVGSSAGPPG. The GYF domain occupies 474–522; that stretch reads ARKWFYKDPQGEIQGPFTTQEMAEWFQAGYFSMSLLVKRGCDEGFQPLG. A phosphoserine mark is found at S538 and S638. Disordered regions lie at residues 621–640, 696–724, and 825–879; these read PPRG…LSVP, KREE…QEEE, and WGGP…RPIR. Positions 629 to 639 are enriched in polar residues; sequence LLPTMSRSLSV. Over residues 696–722 the composition is skewed to basic and acidic residues; it reads KREEEERKRREEKRRQQQQEEQKRRQE. Low complexity predominate over residues 857 to 874; that stretch reads LKNSRSSPSLSDSYSHLS. Residue S862 is modified to Phosphoserine.

The protein belongs to the GIGYF family. In terms of assembly, interacts with GRB10. This transient binding is increased under IGF1 stimulation and leads to recruitment of GIGYF1/GRB10 complex to IGF1 receptor. Interacts with DDX6.

Functionally, may act cooperatively with GRB10 to regulate tyrosine kinase receptor signaling. May increase IGF1 receptor phosphorylation under IGF1 stimulation as well as phosphorylation of IRS1 and SHC1. This is GRB10-interacting GYF protein 1 (GIGYF1) from Homo sapiens (Human).